Here is a 303-residue protein sequence, read N- to C-terminus: Nucleotide-binding protein Acry_0446 (303 aa).

10-17 (GLSGAGRN) serves as a coordination point for ATP. 54–57 (DART) provides a ligand contact to GTP.

Belongs to the RapZ-like family.

Functionally, displays ATPase and GTPase activities. This chain is Nucleotide-binding protein Acry_0446, found in Acidiphilium cryptum (strain JF-5).